The sequence spans 421 residues: 3-phosphoshikimate 1-carboxyvinyltransferase (421 aa).

Lys21, Ser22, and Arg26 together coordinate 3-phosphoshikimate. A phosphoenolpyruvate-binding site is contributed by Lys21. Phosphoenolpyruvate contacts are provided by Gly93 and Arg121. Residues Ser166, Ser167, Gln168, Ser194, Asp310, and Lys337 each coordinate 3-phosphoshikimate. Gln168 provides a ligand contact to phosphoenolpyruvate. Catalysis depends on Asp310, which acts as the Proton acceptor. Residues Arg341, Arg382, and Lys407 each contribute to the phosphoenolpyruvate site.

Belongs to the EPSP synthase family. As to quaternary structure, monomer.

It is found in the cytoplasm. It carries out the reaction 3-phosphoshikimate + phosphoenolpyruvate = 5-O-(1-carboxyvinyl)-3-phosphoshikimate + phosphate. The protein operates within metabolic intermediate biosynthesis; chorismate biosynthesis. In terms of biological role, catalyzes the transfer of the enolpyruvyl moiety of phosphoenolpyruvate (PEP) to the 5-hydroxyl of shikimate-3-phosphate (S3P) to produce enolpyruvyl shikimate-3-phosphate and inorganic phosphate. The chain is 3-phosphoshikimate 1-carboxyvinyltransferase from Methanoregula boonei (strain DSM 21154 / JCM 14090 / 6A8).